Here is a 160-residue protein sequence, read N- to C-terminus: Putative 4-hydroxy-4-methyl-2-oxoglutarate aldolase (160 aa).

Substrate is bound by residues 75-78 (GDQL) and R97. Residue D98 participates in a divalent metal cation binding.

The protein belongs to the class II aldolase/RraA-like family. As to quaternary structure, homotrimer. The cofactor is a divalent metal cation.

It catalyses the reaction 4-hydroxy-4-methyl-2-oxoglutarate = 2 pyruvate. The catalysed reaction is oxaloacetate + H(+) = pyruvate + CO2. Its function is as follows. Catalyzes the aldol cleavage of 4-hydroxy-4-methyl-2-oxoglutarate (HMG) into 2 molecules of pyruvate. Also contains a secondary oxaloacetate (OAA) decarboxylase activity due to the common pyruvate enolate transition state formed following C-C bond cleavage in the retro-aldol and decarboxylation reactions. This chain is Putative 4-hydroxy-4-methyl-2-oxoglutarate aldolase, found in Vibrio parahaemolyticus serotype O3:K6 (strain RIMD 2210633).